The primary structure comprises 431 residues: Divergent protein kinase domain 1B (431 aa).

Residues 1–30 (MRKLRRLVHMVLFCPISKGLQSRLPGIKVK) lie on the Cytoplasmic side of the membrane. The short motif at 5 to 6 (RR) is the May mediate ER retention element. Residues 31-51 (YLFLAWLSVFVGSWVVYMHYS) form a helical membrane-spanning segment. Over 52–431 (SYSELCRGHV…WKKISNTKYS (380 aa)) the chain is Lumenal. 2 cysteine pairs are disulfide-bonded: Cys57–Cys94 and Cys62–Cys117.

Belongs to the DIPK family. In terms of processing, among the many cysteines in the lumenal domain, most are probably involved in disulfide bonds.

It is found in the endoplasmic reticulum membrane. The protein is Divergent protein kinase domain 1B (dipk1b) of Xenopus tropicalis (Western clawed frog).